The chain runs to 280 residues: Acetyl-coenzyme A carboxylase carboxyl transferase subunit beta (280 aa).

Residues 26–280 form the CoA carboxyltransferase N-terminal domain; it reads LWQKCPRCGE…TKLLAWHSQK (255 aa). Zn(2+)-binding residues include cysteine 30, cysteine 33, cysteine 49, and cysteine 52. Residues 30–52 form a C4-type zinc finger; sequence CPRCGEIIFNKELEKNFKVCPKC.

It belongs to the AccD/PCCB family. As to quaternary structure, acetyl-CoA carboxylase is a heterohexamer composed of biotin carboxyl carrier protein (AccB), biotin carboxylase (AccC) and two subunits each of ACCase subunit alpha (AccA) and ACCase subunit beta (AccD). Zn(2+) serves as cofactor.

It is found in the cytoplasm. It catalyses the reaction N(6)-carboxybiotinyl-L-lysyl-[protein] + acetyl-CoA = N(6)-biotinyl-L-lysyl-[protein] + malonyl-CoA. The protein operates within lipid metabolism; malonyl-CoA biosynthesis; malonyl-CoA from acetyl-CoA: step 1/1. Its function is as follows. Component of the acetyl coenzyme A carboxylase (ACC) complex. Biotin carboxylase (BC) catalyzes the carboxylation of biotin on its carrier protein (BCCP) and then the CO(2) group is transferred by the transcarboxylase to acetyl-CoA to form malonyl-CoA. The chain is Acetyl-coenzyme A carboxylase carboxyl transferase subunit beta from Carboxydothermus hydrogenoformans (strain ATCC BAA-161 / DSM 6008 / Z-2901).